We begin with the raw amino-acid sequence, 688 residues long: Glycine--tRNA ligase beta subunit (688 aa).

The protein belongs to the class-II aminoacyl-tRNA synthetase family. Tetramer of two alpha and two beta subunits.

The protein resides in the cytoplasm. The enzyme catalyses tRNA(Gly) + glycine + ATP = glycyl-tRNA(Gly) + AMP + diphosphate. The chain is Glycine--tRNA ligase beta subunit from Aliivibrio salmonicida (strain LFI1238) (Vibrio salmonicida (strain LFI1238)).